Reading from the N-terminus, the 265-residue chain is Leucine-rich repeat-containing protein Bf66946 (265 aa).

Residues 1–20 (MALRDIFLLSMAMTAVTVQA) form the signal peptide. Cystine bridges form between Cys-21–Cys-27 and Cys-25–Cys-39. The LRRNT domain maps to 21–50 (CPSACKCTVSLYGEMVVACGGMGLTEIPED). 3 LRR repeats span residues 51-75 (IPHRAVYLVLKDNNITKITSYSFKG), 76-99 (LRNLQGIDLSNNKINHISSAALRH), and 100-123 (LGHLDDIDLSRNELTSVSEKLFDF). N-linked (GlcNAc...) asparagine glycosylation occurs at Asn-64. The region spanning 142–193 (NPWGCDCRMAWLAQELAGGSKTFGDRHMECATPAALAGRGLSEIPQTSFVCT) is the LRRCT domain. 2 disulfides stabilise this stretch: Cys-146–Cys-171 and Cys-148–Cys-192. Residues 220-240 (VAVVFGCITGLVTILLLVLTA) traverse the membrane as a helical segment.

It is found in the cell membrane. Binds selectively to the Gram-positive bacteria S.aureus and S.pneumoniae. Does not adhere to the Gram-negative bacteria E.coli and S.enterica. Probably recognizes peptidoglycans expressed on the bacterial cell surface. The sequence is that of Leucine-rich repeat-containing protein Bf66946 from Branchiostoma floridae (Florida lancelet).